Reading from the N-terminus, the 437-residue chain is ATP-dependent RNA helicase SUB2 (437 aa).

A compositionally biased stretch (acidic residues) spans 1-19 (MSHEAEEDLLEYSDNEQEV). Residues 1–45 (MSHEAEEDLLEYSDNEQEVQVDNKATEVNAEGNGESQAKDSDKKG) form a disordered region. A Q motif motif is present at residues 53 to 81 (TGFKDFLLKPELSRAIIDCGFEHPSEVQQ). The region spanning 84-259 (IPQSIHGTDV…RRFLQNPLEI (176 aa)) is the Helicase ATP-binding domain. Position 97 to 104 (97 to 104 (AKSGLGKT)) interacts with ATP. Positions 206-209 (DECD) match the DECD box motif. One can recognise a Helicase C-terminal domain in the interval 287-432 (KLAQLLDDLE…EFPEEGVDPS (146 aa)).

It belongs to the DEAD box helicase family. DECD subfamily.

Its subcellular location is the nucleus. It catalyses the reaction ATP + H2O = ADP + phosphate + H(+). In terms of biological role, ATP-binding RNA helicase involved in transcription elongation and required for the export of mRNA out of the nucleus. SUB2 also plays a role in pre-mRNA splicing and spliceosome assembly. May be involved in rDNA and telomeric silencing, and maintenance of genome integrity. The protein is ATP-dependent RNA helicase SUB2 (SUB2) of Kluyveromyces lactis (strain ATCC 8585 / CBS 2359 / DSM 70799 / NBRC 1267 / NRRL Y-1140 / WM37) (Yeast).